Consider the following 50-residue polypeptide: uncharacterized protein (50 aa).

The signal sequence occupies residues 1-22 (MSKVAALGWGTLVYLGVGLLLA).

This is an uncharacterized protein from Dictyostelium discoideum (Social amoeba).